Consider the following 166-residue polypeptide: MAIKLEDKKAIVAEVNEAAKAGLSAVVADARGVTVGAMTGLRKEARAAGVYVKVVRNTLLKRAVEGTQFDVLNDVFKGPTLIAFSNEHPGAAARIFKEFAKGQDKFEIKAAAFEGKFLAANQIDVLASLPTREEGIAQLMSVIQGATSKLARTLAAIRDQKEAAAA.

The protein belongs to the universal ribosomal protein uL10 family. Part of the ribosomal stalk of the 50S ribosomal subunit. The N-terminus interacts with L11 and the large rRNA to form the base of the stalk. The C-terminus forms an elongated spine to which L12 dimers bind in a sequential fashion forming a multimeric L10(L12)X complex.

Its function is as follows. Forms part of the ribosomal stalk, playing a central role in the interaction of the ribosome with GTP-bound translation factors. The polypeptide is Large ribosomal subunit protein uL10 (Stutzerimonas stutzeri (strain A1501) (Pseudomonas stutzeri)).